We begin with the raw amino-acid sequence, 160 residues long: Large ribosomal subunit protein uL22c (160 aa).

It belongs to the universal ribosomal protein uL22 family. In terms of assembly, part of the 50S ribosomal subunit.

Its subcellular location is the plastid. The protein resides in the chloroplast. Its function is as follows. This protein binds specifically to 23S rRNA. In terms of biological role, the globular domain of the protein is located near the polypeptide exit tunnel on the outside of the subunit, while an extended beta-hairpin is found that lines the wall of the exit tunnel in the center of the 70S ribosome. The protein is Large ribosomal subunit protein uL22c (rpl22) of Arabidopsis thaliana (Mouse-ear cress).